The chain runs to 344 residues: Beta-1,4-galactosyltransferase 4 (344 aa).

The Cytoplasmic segment spans residues 1-12 (MGFNLTFHLSYK). Residues 13-38 (FRLLLLLTLCLTVVGWATSNYFVGAI) traverse the membrane as a helical; Signal-anchor for type II membrane protein segment. The Lumenal segment spans residues 39–344 (QEIPKAKEFM…NITVDFWFGA (306 aa)). Residues cysteine 77 and cysteine 118 are joined by a disulfide bond. UDP-alpha-D-galactose-binding positions include 129-133 (PHRNR), 168-170 (FNR), and 195-196 (VD). Residues cysteine 189 and cysteine 208 are joined by a disulfide bond. Aspartate 196 is a Mn(2+) binding site. A glycan (N-linked (GlcNAc...) asparagine) is linked at asparagine 220. Residues tyrosine 224 and tryptophan 256 each coordinate UDP-alpha-D-galactose. 258-261 (GEDD) contacts N-acetyl-D-glucosamine. A Mn(2+)-binding site is contributed by histidine 289. 289–291 (HTR) serves as a coordination point for UDP-alpha-D-galactose. Arginine 301 contributes to the N-acetyl-D-glucosamine binding site. A glycan (N-linked (GlcNAc...) asparagine) is linked at asparagine 335.

Belongs to the glycosyltransferase 7 family. In terms of assembly, interacts with SLC35A2 (isoform 2; UGT1). The cofactor is Mn(2+). In terms of processing, N-glycosylated. As to expression, highest expression is observed in placenta, pancreas, kidney and heart. Expressed in corneal epithelial cells.

The protein resides in the golgi apparatus membrane. It is found in the secreted. It carries out the reaction N-acetyl-D-glucosamine + UDP-alpha-D-galactose = beta-D-galactosyl-(1-&gt;4)-N-acetyl-D-glucosamine + UDP + H(+). It catalyses the reaction a beta-D-GlcNAc-(1-&gt;3)-beta-D-Gal-(1-&gt;4)-beta-D-Glc-(1&lt;-&gt;1)-Cer(d18:1(4E)) + UDP-alpha-D-galactose = a neolactoside nLc4Cer(d18:1(4E)) + UDP + H(+). The catalysed reaction is 3-O-{beta-D-galactosyl-(1-&gt;3)-[6-O-sulfo-N-acetyl-beta-D-glucosaminyl-(1-&gt;6)]-N-acetyl-alpha-D-galactosaminyl}-L-seryl-[protein] + UDP-alpha-D-galactose = 3-O-{beta-D-galactosyl-(1-&gt;3)-[beta-D-galactosyl-(1-&gt;4)-6-O-sulfo-N-acetyl-beta-D-glucosaminyl-(1-&gt;6)]-N-acetyl-alpha-D-galactosaminyl}-L-seryl-[protein] + UDP + H(+). The enzyme catalyses 3-O-{beta-D-galactosyl-(1-&gt;3)-[6-O-sulfo-N-acetyl-beta-D-glucosaminyl-(1-&gt;6)]-N-acetyl-alpha-D-galactosaminyl}-L-threonyl-[protein] + UDP-alpha-D-galactose = 3-O-{beta-D-galactosyl-(1-&gt;3)-[beta-D-galactosyl-(1-&gt;4)-6-O-sulfo-N-acetyl-beta-D-glucosaminyl-(1-&gt;6)]-N-acetyl-alpha-D-galactosaminyl}-L-threonyl-[protein] + UDP + H(+). The protein operates within protein modification; protein glycosylation. It functions in the pathway glycolipid biosynthesis. With respect to regulation, up-regulated by LALBA. Its function is as follows. Galactose (Gal) transferase involved in the synthesis of terminal N-acetyllactosamine (LacNac) unit present on glycan chains of glycoproteins and glycosphingolipids. Catalyzes the transfer of Gal residue via a beta1-&gt;4 linkage from UDP-Gal to the non-reducing terminal N-acetyl glucosamine 6-O-sulfate (6-O-sulfoGlcNAc) in the linearly growing chain of both N- and O-linked keratan sulfate proteoglycans. Cooperates with B3GNT7 N-acetyl glucosamine transferase and CHST6 and CHST1 sulfotransferases to construct and elongate mono- and disulfated disaccharide units [-&gt;3Galbeta1-&gt;4(6-sulfoGlcNAcbeta)1-&gt;] and [-&gt;3(6-sulfoGalbeta)1-&gt;4(6-sulfoGlcNAcbeta)1-&gt;] within keratan sulfate polymer. Transfers Gal residue via a beta1-&gt;4 linkage to terminal 6-O-sulfoGlcNAc within the LacNac unit of core 2 O-glycans forming 6-sulfo-sialyl-Lewis X (sLex). May contribute to the generation of sLex epitope on mucin-type glycoproteins that serve as ligands for SELL/L-selectin, a major regulator of leukocyte migration. In the biosynthesis pathway of neolacto-series glycosphingolipids, transfers Gal residue via a beta1-&gt;4 linkage to terminal GlcNAc of a lactotriaosylceramide (Lc3Cer) acceptor to form a neolactotetraosylceramide. This chain is Beta-1,4-galactosyltransferase 4, found in Homo sapiens (Human).